The following is a 763-amino-acid chain: DNA polymerase 3 (763 aa).

This sequence belongs to the DNA polymerase type-B family.

It carries out the reaction DNA(n) + a 2'-deoxyribonucleoside 5'-triphosphate = DNA(n+1) + diphosphate. The chain is DNA polymerase 3 (dpo3) from Saccharolobus shibatae (strain ATCC 51178 / DSM 5389 / JCM 8931 / NBRC 15437 / B12) (Sulfolobus shibatae).